A 260-amino-acid polypeptide reads, in one-letter code: Ribonuclease PH (260 aa).

Residues R87 and 125–127 (GTR) each bind phosphate. The segment at 232-260 (LAAPPAAGPPAPERAGAGSGSGGKGTGSR) is disordered. Residues 248-260 (AGSGSGGKGTGSR) are compositionally biased toward gly residues.

This sequence belongs to the RNase PH family. Homohexameric ring arranged as a trimer of dimers.

The enzyme catalyses tRNA(n+1) + phosphate = tRNA(n) + a ribonucleoside 5'-diphosphate. Its function is as follows. Phosphorolytic 3'-5' exoribonuclease that plays an important role in tRNA 3'-end maturation. Removes nucleotide residues following the 3'-CCA terminus of tRNAs; can also add nucleotides to the ends of RNA molecules by using nucleoside diphosphates as substrates, but this may not be physiologically important. Probably plays a role in initiation of 16S rRNA degradation (leading to ribosome degradation) during starvation. This is Ribonuclease PH from Parafrankia sp. (strain EAN1pec).